The chain runs to 232 residues: Putative homeobox protein NANOG2 (232 aa).

Residues 1–39 (MDLPIQDSHDSSTSPKGKQPTTAEKSATKKEDKVPVKKQ) are disordered. The segment covering 11–25 (SSTSPKGKQPTTAEK) has biased composition (polar residues). Residues 26–35 (SATKKEDKVP) show a composition bias toward basic and acidic residues. 8 repeat units span residues 123-127 (WSNQT), 128-132 (WNNST), 133-137 (WSNQT), 143-147 (WSNHS), 148-152 (WNTQT), 153-157 (WCTQS), 158-162 (WNNQA), and 163-167 (WNSPF). The interval 123–167 (WSNQTWNNSTWSNQTQNIQSWSNHSWNTQTWCTQSWNNQAWNSPF) is 8 X repeats starting with a Trp in each unit. The sufficient for transactivation activity stretch occupies residues 123-167 (WSNQTWNNSTWSNQTQNIQSWSNHSWNTQTWCTQSWNNQAWNSPF). The tract at residues 168-232 (YNCGEESLQS…YSTNMXXEDV (65 aa)) is sufficient for strong transactivation activity.

It belongs to the Nanog homeobox family.

Its subcellular location is the nucleus. Functionally, probable transcriptional regulator. In Pan paniscus (Pygmy chimpanzee), this protein is Putative homeobox protein NANOG2 (NANOGP1).